The primary structure comprises 346 residues: tRNA-specific 2-thiouridylase MnmA (346 aa).

Residue 6-13 participates in ATP binding; the sequence is AMSGGTDS. Residue Cys90 is the Nucleophile of the active site. Cys90 and Cys187 are disulfide-bonded. Residue Gly114 participates in ATP binding. The interval 137–139 is interaction with tRNA; it reads KDQ. The active-site Cysteine persulfide intermediate is the Cys187. The interaction with tRNA stretch occupies residues 292–293; it reads RY.

It belongs to the MnmA/TRMU family.

The protein resides in the cytoplasm. The catalysed reaction is S-sulfanyl-L-cysteinyl-[protein] + uridine(34) in tRNA + AH2 + ATP = 2-thiouridine(34) in tRNA + L-cysteinyl-[protein] + A + AMP + diphosphate + H(+). Catalyzes the 2-thiolation of uridine at the wobble position (U34) of tRNA, leading to the formation of s(2)U34. The protein is tRNA-specific 2-thiouridylase MnmA of Nitratidesulfovibrio vulgaris (strain ATCC 29579 / DSM 644 / CCUG 34227 / NCIMB 8303 / VKM B-1760 / Hildenborough) (Desulfovibrio vulgaris).